The primary structure comprises 166 residues: MIRGWTIFTLCKPSALVGSSHFNKQFNWAKSQLQFATKVPQQPYAKTESILPTLQEPDTKPAIDRHTVQLLERLSLVDLETNDALETLEDSIGFASRILTIGTEGVEPLYTVLERERLSLREDVVNDGDLQTDVLRNAAVTEEEYFVAPPGNIPLELQENSRPIAH.

The transit peptide at 1–44 (MIRGWTIFTLCKPSALVGSSHFNKQFNWAKSQLQFATKVPQQPY) directs the protein to the mitochondrion.

Belongs to the GatC family. As to quaternary structure, subunit of the heterotrimeric GatCAB amidotransferase (AdT) complex, composed of A, B and C subunits.

It localises to the mitochondrion. It catalyses the reaction L-glutamyl-tRNA(Gln) + L-glutamine + ATP + H2O = L-glutaminyl-tRNA(Gln) + L-glutamate + ADP + phosphate + H(+). Functionally, allows the formation of correctly charged Gln-tRNA(Gln) through the transamidation of misacylated Glu-tRNA(Gln) in the mitochondria. The reaction takes place in the presence of glutamine and ATP through an activated gamma-phospho-Glu-tRNA(Gln). This is Glutamyl-tRNA(Gln) amidotransferase subunit C, mitochondrial from Anopheles darlingi (Mosquito).